Reading from the N-terminus, the 219-residue chain is ATP phosphoribosyltransferase (219 aa).

This sequence belongs to the ATP phosphoribosyltransferase family. Short subfamily. As to quaternary structure, heteromultimer composed of HisG and HisZ subunits.

It localises to the cytoplasm. It catalyses the reaction 1-(5-phospho-beta-D-ribosyl)-ATP + diphosphate = 5-phospho-alpha-D-ribose 1-diphosphate + ATP. It functions in the pathway amino-acid biosynthesis; L-histidine biosynthesis; L-histidine from 5-phospho-alpha-D-ribose 1-diphosphate: step 1/9. In terms of biological role, catalyzes the condensation of ATP and 5-phosphoribose 1-diphosphate to form N'-(5'-phosphoribosyl)-ATP (PR-ATP). Has a crucial role in the pathway because the rate of histidine biosynthesis seems to be controlled primarily by regulation of HisG enzymatic activity. The sequence is that of ATP phosphoribosyltransferase from Syntrophotalea carbinolica (strain DSM 2380 / NBRC 103641 / GraBd1) (Pelobacter carbinolicus).